The following is a 276-amino-acid chain: MIRVIALSNPRLAQAFVDYMRTQQVHLDMRPQGHEAELWLEDETQLSKVQEALEIFLRDPTNPRYLAASWQTGSMDTGIQYQRYSYLQTLKQKAGPLTLSVMVVTIAVFILMQISGYESVMTWLAFPAEGQQLQLWRWFSHALLHFSLLHILFNLMWWWYLGGPVEKVLGTGKLLVIALVSALVSGWAQSWCSGTYFGGLSGVVYALMGYVWLRGEREPDGYLSMPRSLMAFALLWLVAGYFDILGMSIANAAHVAGLIVGLLMAFWDTYNKTNPR.

Transmembrane regions (helical) follow at residues 94–114 (AGPL…LMQI), 142–162 (ALLH…WYLG), 168–188 (VLGT…SGWA), 193–213 (SGTY…YVWL), 229–249 (LMAF…GMSI), and 250–270 (ANAA…WDTY). Serine 201 functions as the Nucleophile in the catalytic mechanism. Residue histidine 254 is part of the active site.

It belongs to the peptidase S54 family.

It localises to the cell inner membrane. It catalyses the reaction Cleaves type-1 transmembrane domains using a catalytic dyad composed of serine and histidine that are contributed by different transmembrane domains.. Its function is as follows. Rhomboid-type serine protease that catalyzes intramembrane proteolysis. The chain is Rhomboid protease GlpG from Pectobacterium atrosepticum (strain SCRI 1043 / ATCC BAA-672) (Erwinia carotovora subsp. atroseptica).